An 81-amino-acid chain; its full sequence is Conotoxin ArMKLT2-01 (81 aa).

An N-terminal signal peptide occupies residues 1 to 19; sequence MKLTCVIIVVALFLTACHA. Residues 20–43 constitute a propeptide that is removed on maturation; the sequence is KDKQEHPAVRGSDDMQDSEDLKLA. 3 disulfides stabilise this stretch: Cys46-Cys61, Cys53-Cys65, and Cys60-Cys74.

The protein belongs to the conotoxin O1 superfamily. In terms of tissue distribution, expressed by the venom duct.

The protein localises to the secreted. The chain is Conotoxin ArMKLT2-01 from Conus arenatus (Sand-dusted cone).